The chain runs to 627 residues: Siderophore iron transporter ARN1 (627 aa).

Residues 1–70 lie on the Extracellular side of the membrane; the sequence is MESVHSRDPV…TEIIGSAYNK (70 aa). The helical transmembrane segment at 71-91 threads the bilayer; that stretch reads WYLQAILLLSAFICGYGYGLD. Residues 92–110 lie on the Cytoplasmic side of the membrane; the sequence is GNIRYIYTGYATSSYSEHS. Residues 111 to 131 traverse the membrane as a helical segment; that stretch reads LLSTINVINAVVSAASQIIYA. Over 132–135 the chain is Extracellular; the sequence is RLSD. Residues 136–156 form a helical membrane-spanning segment; it reads VFGRLYLFISAVILYVVGTII. The Cytoplasmic portion of the chain corresponds to 157-167; the sequence is QSQAYDVQRYA. A helical membrane pass occupies residues 168–188; that stretch reads AGAIFYNAGYVGVILILLIIL. Residues 189–197 are Extracellular-facing; the sequence is SDFSSLKWR. The chain crosses the membrane as a helical span at residues 198 to 218; it reads LLYQFVPTWPFIINTWIAGNI. Topologically, residues 219–231 are cytoplasmic; sequence TSRANPVVNWSWD. A helical membrane pass occupies residues 232 to 252; the sequence is VGMWAFIFPLSCVPIVLCMLH. Topologically, residues 253–290 are extracellular; sequence MQWRARKTPEWHALKGQKSYYQEHGFIKILKQLFWMLD. Residues 291–311 traverse the membrane as a helical segment; the sequence is VVGVLLMGCSLGCILVPLTLA. Residues 312–323 lie on the Cytoplasmic side of the membrane; sequence GGVKTTWNDSRL. The helical transmembrane segment at 324 to 344 threads the bilayer; that stretch reads IGPFVLGFVLIPILWIWEYRF. Residues 345–367 are Extracellular-facing; it reads ARDPILPYRLVKDRAVWSSMGIS. Residues 368–388 traverse the membrane as a helical segment; sequence FLIDFIYYMAADYLYTVMIVA. The Cytoplasmic portion of the chain corresponds to 389–398; it reads VNESVKSATR. The chain crosses the membrane as a helical span at residues 399-419; it reads IATLSSFVSTVASPFFALLVT. Topologically, residues 420–424 are extracellular; sequence RCTRL. Residues 425-445 form a helical membrane-spanning segment; it reads KPFIMFGCALWMVAMGLLYHF. Residues 446 to 454 lie on the Cytoplasmic side of the membrane; it reads RGGSQSHSG. A helical transmembrane segment spans residues 455-475; the sequence is IIGALCVWGVGTTLFTYPVTV. Over 476–563 the chain is Extracellular; sequence SVQSAVSHEN…LMNAYKYVQR (88 aa). The helical transmembrane segment at 564–584 threads the bilayer; sequence LETIVALVFCVPLIAFSLCLR. At 585-627 the chain is on the cytoplasmic side; it reads DPKLTDTVAVEYIEDGEYVDTKDNDPILDWFEKLPSKFTFKRE.

This sequence belongs to the major facilitator superfamily.

The protein localises to the cell membrane. Its subcellular location is the endosome membrane. Involved in the transport of siderophore ferrichrome and so has a role in iron homeostasis. The protein is Siderophore iron transporter ARN1 (ARN1) of Saccharomyces cerevisiae (strain ATCC 204508 / S288c) (Baker's yeast).